The chain runs to 31 residues: Basic phospholipase A2 13 (31 aa).

The protein belongs to the phospholipase A2 family. Group I subfamily. Ca(2+) serves as cofactor. As to expression, expressed by the venom gland.

The protein localises to the secreted. The catalysed reaction is a 1,2-diacyl-sn-glycero-3-phosphocholine + H2O = a 1-acyl-sn-glycero-3-phosphocholine + a fatty acid + H(+). In terms of biological role, snake venom phospholipase A2 (PLA2) that inhibits neuromuscular transmission by blocking acetylcholine release from the nerve termini. PLA2 catalyzes the calcium-dependent hydrolysis of the 2-acyl groups in 3-sn-phosphoglycerides. The polypeptide is Basic phospholipase A2 13 (Bungarus fasciatus (Banded krait)).